The following is a 262-amino-acid chain: Acyl-[acyl-carrier-protein]--UDP-N-acetylglucosamine O-acyltransferase (262 aa).

It belongs to the transferase hexapeptide repeat family. LpxA subfamily. Homotrimer.

It localises to the cytoplasm. The catalysed reaction is a (3R)-hydroxyacyl-[ACP] + UDP-N-acetyl-alpha-D-glucosamine = a UDP-3-O-[(3R)-3-hydroxyacyl]-N-acetyl-alpha-D-glucosamine + holo-[ACP]. It participates in glycolipid biosynthesis; lipid IV(A) biosynthesis; lipid IV(A) from (3R)-3-hydroxytetradecanoyl-[acyl-carrier-protein] and UDP-N-acetyl-alpha-D-glucosamine: step 1/6. Involved in the biosynthesis of lipid A, a phosphorylated glycolipid that anchors the lipopolysaccharide to the outer membrane of the cell. The chain is Acyl-[acyl-carrier-protein]--UDP-N-acetylglucosamine O-acyltransferase from Enterobacter sp. (strain 638).